The following is a 635-amino-acid chain: 1-deoxy-D-xylulose-5-phosphate synthase (635 aa).

Thiamine diphosphate-binding positions include histidine 79 and 120 to 122 (GHS). Aspartate 151 provides a ligand contact to Mg(2+). Thiamine diphosphate-binding positions include 152 to 153 (GA), asparagine 182, tyrosine 291, and glutamate 372. A Mg(2+)-binding site is contributed by asparagine 182.

This sequence belongs to the transketolase family. DXPS subfamily. As to quaternary structure, homodimer. Mg(2+) serves as cofactor. It depends on thiamine diphosphate as a cofactor.

The catalysed reaction is D-glyceraldehyde 3-phosphate + pyruvate + H(+) = 1-deoxy-D-xylulose 5-phosphate + CO2. It functions in the pathway metabolic intermediate biosynthesis; 1-deoxy-D-xylulose 5-phosphate biosynthesis; 1-deoxy-D-xylulose 5-phosphate from D-glyceraldehyde 3-phosphate and pyruvate: step 1/1. In terms of biological role, catalyzes the acyloin condensation reaction between C atoms 2 and 3 of pyruvate and glyceraldehyde 3-phosphate to yield 1-deoxy-D-xylulose-5-phosphate (DXP). In Xylella fastidiosa (strain M23), this protein is 1-deoxy-D-xylulose-5-phosphate synthase.